The sequence spans 285 residues: Tropomyosin-2 (285 aa).

Residues 1–277 adopt a coiled-coil conformation; that stretch reads MDAIKKKMQA…KDIGDDLDTA (277 aa). A disordered region spans residues 103–133; the sequence is EERLATATAKLSEASQAADESERARKVLENR. Residues 122–133 show a composition bias toward basic and acidic residues; it reads ESERARKVLENR.

Belongs to the tropomyosin family. As to quaternary structure, homodimer.

Tropomyosin, in association with the troponin complex, plays a central role in the calcium dependent regulation of muscle contraction. In Bombyx mori (Silk moth), this protein is Tropomyosin-2.